The sequence spans 212 residues: Pyridoxine/pyridoxamine 5'-phosphate oxidase (212 aa).

Residues 7–10 (REEY) and K65 contribute to the substrate site. FMN is bound by residues 60-65 (RTVLLK), 75-76 (FT), K82, and Q104. 3 residues coordinate substrate: Y122, R126, and S130. FMN contacts are provided by residues 139–140 (QS) and W184. Position 190-192 (190-192 (RLH)) interacts with substrate. R194 serves as a coordination point for FMN.

This sequence belongs to the pyridoxamine 5'-phosphate oxidase family. Homodimer. Requires FMN as cofactor.

The catalysed reaction is pyridoxamine 5'-phosphate + O2 + H2O = pyridoxal 5'-phosphate + H2O2 + NH4(+). It catalyses the reaction pyridoxine 5'-phosphate + O2 = pyridoxal 5'-phosphate + H2O2. It functions in the pathway cofactor metabolism; pyridoxal 5'-phosphate salvage; pyridoxal 5'-phosphate from pyridoxamine 5'-phosphate: step 1/1. It participates in cofactor metabolism; pyridoxal 5'-phosphate salvage; pyridoxal 5'-phosphate from pyridoxine 5'-phosphate: step 1/1. Catalyzes the oxidation of either pyridoxine 5'-phosphate (PNP) or pyridoxamine 5'-phosphate (PMP) into pyridoxal 5'-phosphate (PLP). The polypeptide is Pyridoxine/pyridoxamine 5'-phosphate oxidase (Rippkaea orientalis (strain PCC 8801 / RF-1) (Cyanothece sp. (strain PCC 8801))).